Consider the following 66-residue polypeptide: Large ribosomal subunit protein bL31 (66 aa).

Zn(2+) is bound by residues Cys-16, Cys-18, Cys-36, and Cys-39.

Belongs to the bacterial ribosomal protein bL31 family. Type A subfamily. As to quaternary structure, part of the 50S ribosomal subunit. Zn(2+) serves as cofactor.

Binds the 23S rRNA. This is Large ribosomal subunit protein bL31 from Campylobacter hominis (strain ATCC BAA-381 / DSM 21671 / CCUG 45161 / LMG 19568 / NCTC 13146 / CH001A).